We begin with the raw amino-acid sequence, 568 residues long: Protein KATNIP homolog (568 aa).

Residues 1–20 (MSDSDLKEIEKNAENIKLEP) show a composition bias toward basic and acidic residues. The interval 1–30 (MSDSDLKEIEKNAENIKLEPAEDEVNEEDQ) is disordered. Residues 21 to 30 (AEDEVNEEDQ) show a composition bias toward acidic residues.

Expressed in most ciliated neuronal cells. Not expressed in non-ciliated cells.

It is found in the cytoplasm. The protein resides in the cytoskeleton. Its subcellular location is the cilium axoneme. The protein localises to the cilium basal body. May regulate ciliary A-tubule number and, along with arl-13, controls cilium integrity. The polypeptide is Protein KATNIP homolog (Caenorhabditis elegans).